The chain runs to 340 residues: Phosphate acyltransferase (340 aa).

Belongs to the PlsX family. As to quaternary structure, homodimer. Probably interacts with PlsY.

Its subcellular location is the cytoplasm. The catalysed reaction is a fatty acyl-[ACP] + phosphate = an acyl phosphate + holo-[ACP]. The protein operates within lipid metabolism; phospholipid metabolism. Its function is as follows. Catalyzes the reversible formation of acyl-phosphate (acyl-PO(4)) from acyl-[acyl-carrier-protein] (acyl-ACP). This enzyme utilizes acyl-ACP as fatty acyl donor, but not acyl-CoA. The protein is Phosphate acyltransferase of Pseudomonas savastanoi pv. phaseolicola (strain 1448A / Race 6) (Pseudomonas syringae pv. phaseolicola (strain 1448A / Race 6)).